Consider the following 227-residue polypeptide: ATP-dependent dethiobiotin synthetase BioD (227 aa).

ATP is bound at residue 13–18; the sequence is NIGKTI. Residue threonine 17 participates in Mg(2+) binding. Residue lysine 38 is part of the active site. Serine 42 is a substrate binding site. Residues aspartate 55, 117 to 120, 177 to 178, 206 to 208, and asparagine 213 each bind ATP; these read EGFG, NH, and PFI. Mg(2+) contacts are provided by aspartate 55 and glutamate 117.

This sequence belongs to the dethiobiotin synthetase family. As to quaternary structure, homodimer. Mg(2+) serves as cofactor.

It is found in the cytoplasm. It carries out the reaction (7R,8S)-7,8-diammoniononanoate + CO2 + ATP = (4R,5S)-dethiobiotin + ADP + phosphate + 3 H(+). The protein operates within cofactor biosynthesis; biotin biosynthesis; biotin from 7,8-diaminononanoate: step 1/2. Functionally, catalyzes a mechanistically unusual reaction, the ATP-dependent insertion of CO2 between the N7 and N8 nitrogen atoms of 7,8-diaminopelargonic acid (DAPA, also called 7,8-diammoniononanoate) to form a ureido ring. This Wigglesworthia glossinidia brevipalpis protein is ATP-dependent dethiobiotin synthetase BioD.